The primary structure comprises 332 residues: Ketol-acid reductoisomerase (NADP(+)) (332 aa).

The region spanning 5 to 185 is the KARI N-terminal Rossmann domain; sequence VKVYYDDEVS…GCTRAGVIET (181 aa). Residues 28–31, Arg51, Ser56, and 86–89 each bind NADP(+); these read YGNQ and DLVQ. His111 is an active-site residue. Residue Gly137 participates in NADP(+) binding. The 146-residue stretch at 186–331 folds into the KARI C-terminal knotted domain; it reads TFKDETESDL…RFIRKMSGLE (146 aa). Mg(2+) contacts are provided by Asp194, Glu198, Glu230, and Glu234. Position 255 (Ser255) interacts with substrate.

It belongs to the ketol-acid reductoisomerase family. Mg(2+) is required as a cofactor.

The enzyme catalyses (2R)-2,3-dihydroxy-3-methylbutanoate + NADP(+) = (2S)-2-acetolactate + NADPH + H(+). It carries out the reaction (2R,3R)-2,3-dihydroxy-3-methylpentanoate + NADP(+) = (S)-2-ethyl-2-hydroxy-3-oxobutanoate + NADPH + H(+). Its pathway is amino-acid biosynthesis; L-isoleucine biosynthesis; L-isoleucine from 2-oxobutanoate: step 2/4. The protein operates within amino-acid biosynthesis; L-valine biosynthesis; L-valine from pyruvate: step 2/4. Involved in the biosynthesis of branched-chain amino acids (BCAA). Catalyzes an alkyl-migration followed by a ketol-acid reduction of (S)-2-acetolactate (S2AL) to yield (R)-2,3-dihydroxy-isovalerate. In the isomerase reaction, S2AL is rearranged via a Mg-dependent methyl migration to produce 3-hydroxy-3-methyl-2-ketobutyrate (HMKB). In the reductase reaction, this 2-ketoacid undergoes a metal-dependent reduction by NADPH to yield (R)-2,3-dihydroxy-isovalerate. This Pyrococcus abyssi (strain GE5 / Orsay) protein is Ketol-acid reductoisomerase (NADP(+)).